The sequence spans 326 residues: MNLSTANHHIPLNDGNSIPIIGLGTYSDPRPVPGKTFIAVKTAIDEGYRHIDGAYVYRNEHEVGEAIREKVAEGKVKREEIFYCGKLWSTDHDPEMVRPALERTLQTLKLDYIDLYIIEMPMAFKPGEEFYPKDENGRVIYHKSNLCATWEALEACKDAGLVKSLGVSNFNRRQLEVILNKPGLKYKPVTNQVECHPYFTQTKLLEVSASSMTSFIVAYSPLGTCRNPLWVNVSSPPLLKDELLTSLGKKYNKTQAQIVLRFDIQRGLVVIPKSTTPERIKENFQIFDFSLTKEEMKDIEALNKNVRFVEMLMWSDHPEYPFHDEY.

NADP(+) is bound by residues 22-26 and aspartate 52; that span reads GLGTY. Residue tyrosine 26 participates in substrate binding. Substrate-binding residues include tyrosine 57, tryptophan 88, glutamate 119, and tyrosine 131. Residue tyrosine 57 is the Proton donor of the active site. Residues 168–169, glutamine 192, and 219–224 each bind NADP(+); these read SN and YSPLGT. Residue tryptophan 230 coordinates substrate. Residue 273–283 participates in NADP(+) binding; the sequence is KSTTPERIKEN.

This sequence belongs to the aldo/keto reductase family. Post-translationally, the N-terminus is blocked.

It localises to the cytoplasm. The catalysed reaction is 5beta-cholestan-3-one + NADP(+) = cholest-4-en-3-one + NADPH + H(+). The enzyme catalyses 4,5beta-dihydrocortisone + NADP(+) = cortisone + NADPH + H(+). It carries out the reaction cortisol + NADPH + H(+) = 5beta-dihydrocortisol + NADP(+). It catalyses the reaction corticosterone + NADPH + H(+) = 5beta-dihydrocorticosterone + NADP(+). The catalysed reaction is 7alpha,12alpha-dihydroxycholest-4-en-3-one + NADPH + H(+) = 7alpha,12alpha-dihydroxy-5beta-cholestan-3-one + NADP(+). The enzyme catalyses 7alpha-hydroxycholest-4-en-3-one + NADPH + H(+) = 7alpha-hydroxy-5beta-cholestan-3-one + NADP(+). It carries out the reaction epitestosterone + NADPH + H(+) = 5beta-dihydroepitestosterone + NADP(+). It catalyses the reaction androst-4-ene-3,17-dione + NADPH + H(+) = 5beta-androstane-3,17-dione + NADP(+). The catalysed reaction is progesterone + NADPH + H(+) = 5beta-pregnan-3,20-dione + NADP(+). The enzyme catalyses 21-hydroxyprogesterone + NADPH + H(+) = 5beta-dihydrodeoxycorticosterone + NADP(+). It carries out the reaction aldosterone + NADPH + H(+) = 5beta-dihydroaldosterone + NADP(+). It catalyses the reaction 17beta-hydroxyandrosta-1,4-dien-3-one + NADPH + H(+) = 17beta-hydroxy-5beta-androst-1-en-3-one + NADP(+). The catalysed reaction is 17beta-hydroxyestr-4-en-3-one + NADPH + H(+) = 17beta-hydroxy-5beta-estran-3-one + NADP(+). The enzyme catalyses 5beta-dihydrotestosterone + NADP(+) = testosterone + NADPH + H(+). It carries out the reaction androst-4-ene-3,11,17-trione + NADPH + H(+) = 17beta-hydroxyandrost-4-ene-3,11-dione + NADP(+). With respect to regulation, subject to inhibition by high substrate concentrations. Inhibited by testosterone concentrations above 10 uM. Inhibited by the primary and secondary bile acids chenodeoxycholic acid and ursodeoxycholic acid. Its function is as follows. Catalyzes the stereospecific NADPH-dependent reduction of the C4-C5 double bond of bile acid intermediates and steroid hormones carrying a delta(4)-3-one structure to yield an A/B cis-ring junction. This cis-configuration is crucial for bile acid biosynthesis and plays important roles in steroid metabolism. Capable of reducing a broad range of delta-(4)-3-ketosteroids from C18 (such as, 17beta-hydroxyestr-4-en-3-one) to C27 (such as, 7alpha-hydroxycholest-4-en-3-one). The sequence is that of Aldo-keto reductase family 1 member D1 (Akr1d1) from Rattus norvegicus (Rat).